The chain runs to 720 residues: Phosphate acetyltransferase (720 aa).

Positions 389–720 (AFRHELVQKS…LEAKAAALAS (332 aa)) are phosphate acetyltransferase.

It in the N-terminal section; belongs to the CobB/CobQ family. In the C-terminal section; belongs to the phosphate acetyltransferase and butyryltransferase family. As to quaternary structure, homohexamer.

The protein localises to the cytoplasm. The enzyme catalyses acetyl-CoA + phosphate = acetyl phosphate + CoA. The protein operates within metabolic intermediate biosynthesis; acetyl-CoA biosynthesis; acetyl-CoA from acetate: step 2/2. Its function is as follows. Involved in acetate metabolism. This Acinetobacter baylyi (strain ATCC 33305 / BD413 / ADP1) protein is Phosphate acetyltransferase (pta).